We begin with the raw amino-acid sequence, 108 residues long: Probable 4-amino-4-deoxy-L-arabinose-phosphoundecaprenol flippase subunit ArnE (108 aa).

3 helical membrane-spanning segments follow: residues 36 to 56 (SLWL…LVLQ), 58 to 78 (LDVG…TLAG), and 85 to 105 (PVDV…FQLG).

It belongs to the ArnE family. As to quaternary structure, heterodimer of ArnE and ArnF.

Its subcellular location is the cell inner membrane. The protein operates within bacterial outer membrane biogenesis; lipopolysaccharide biosynthesis. Functionally, translocates 4-amino-4-deoxy-L-arabinose-phosphoundecaprenol (alpha-L-Ara4N-phosphoundecaprenol) from the cytoplasmic to the periplasmic side of the inner membrane. The polypeptide is Probable 4-amino-4-deoxy-L-arabinose-phosphoundecaprenol flippase subunit ArnE (Pseudomonas syringae pv. syringae (strain B728a)).